Here is a 294-residue protein sequence, read N- to C-terminus: Deubiquitinase OTUD6B (294 aa).

An N-acetylmethionine modification is found at methionine 1. The OTU domain occupies 148 to 285; it reads LEIKQIPSDG…GEHYNSVTRL (138 aa). The segment at 153 to 159 is cys-loop; the sequence is IPSDGHC. The active site involves aspartate 156. Cysteine 159 acts as the Nucleophile in catalysis. Residues 220-230 are variable-loop; it reads IVNTAAWGGQL. The tract at residues 268 to 278 is his-loop; it reads YMRHAYGLGEH. The active site involves histidine 278.

As to quaternary structure, interacts with the eukaryotic translation initiation factor 4F complex. As to expression, ubiquitously expressed. Expression is observed in several organ systems including the cardiovascular, digestive, central and peripheral nervous and musculoskeletal systems.

The enzyme catalyses Thiol-dependent hydrolysis of ester, thioester, amide, peptide and isopeptide bonds formed by the C-terminal Gly of ubiquitin (a 76-residue protein attached to proteins as an intracellular targeting signal).. In terms of biological role, deubiquitinating enzyme that may play a role in the ubiquitin-dependent regulation of protein synthesis, downstream of mTORC1. May associate with the protein synthesis initiation complex and modify its ubiquitination to repress translation. May also repress DNA synthesis and modify different cellular targets thereby regulating cell growth and proliferation. May also play a role in proteasome assembly and function. This is Deubiquitinase OTUD6B from Mus musculus (Mouse).